A 249-amino-acid polypeptide reads, in one-letter code: Imidazole glycerol phosphate synthase subunit HisF (249 aa).

Residues D11 and D130 contribute to the active site.

This sequence belongs to the HisA/HisF family. Heterodimer of HisH and HisF.

It is found in the cytoplasm. The enzyme catalyses 5-[(5-phospho-1-deoxy-D-ribulos-1-ylimino)methylamino]-1-(5-phospho-beta-D-ribosyl)imidazole-4-carboxamide + L-glutamine = D-erythro-1-(imidazol-4-yl)glycerol 3-phosphate + 5-amino-1-(5-phospho-beta-D-ribosyl)imidazole-4-carboxamide + L-glutamate + H(+). The protein operates within amino-acid biosynthesis; L-histidine biosynthesis; L-histidine from 5-phospho-alpha-D-ribose 1-diphosphate: step 5/9. IGPS catalyzes the conversion of PRFAR and glutamine to IGP, AICAR and glutamate. The HisF subunit catalyzes the cyclization activity that produces IGP and AICAR from PRFAR using the ammonia provided by the HisH subunit. This chain is Imidazole glycerol phosphate synthase subunit HisF, found in Sulfolobus acidocaldarius (strain ATCC 33909 / DSM 639 / JCM 8929 / NBRC 15157 / NCIMB 11770).